The sequence spans 97 residues: Putative septation protein SpoVG (97 aa).

Belongs to the SpoVG family.

Could be involved in septation. In Borrelia garinii subsp. bavariensis (strain ATCC BAA-2496 / DSM 23469 / PBi) (Borreliella bavariensis), this protein is Putative septation protein SpoVG.